A 465-amino-acid polypeptide reads, in one-letter code: MSSPTITVVGAGLAGSEAALAAAKLGVRVRLFEMRPQKMTPAHRTANFAELVCSTSLGGEGEMQSKGLLQAEMRSVGAAIVTSADASRVPAGNALAVDRDAFSAHVTEQVKNHPLIEVVEGEVETVPDGICVIASGPLTADALASDLRRLTGSERLSFYDAAAPVIDVDSIDMDIAWRAGRYDQSADYINCPFTKEEYLAFFEALETARSHTPHDWEKLEFFEGCMPIEEIARRGVDTPRFGPMSPKGLDDPKTGRWPYAVAQLRQEDAEGRMWSLVGFQTGLKWGDQKAVVQLIPGLHNADIVRYGVMHRNTYLNAPEVLDSTLQLRADPQKLVAGVLAGTEGYLESSATGWLAGTNAARLALGLEPLTPPAESMLGGLVRYLASANPKGFQPMNVNWALVPELPTEINEKTGKPKKLGKREKRPPLFRRGLGAFMAWAGQDAGVPVTPPAVPEHPQDELPAIR.

Residue 10 to 15 (GAGLAG) coordinates FAD.

Belongs to the MnmG family. TrmFO subfamily. The cofactor is FAD.

The protein localises to the cytoplasm. It carries out the reaction uridine(54) in tRNA + (6R)-5,10-methylene-5,6,7,8-tetrahydrofolate + NADH + H(+) = 5-methyluridine(54) in tRNA + (6S)-5,6,7,8-tetrahydrofolate + NAD(+). It catalyses the reaction uridine(54) in tRNA + (6R)-5,10-methylene-5,6,7,8-tetrahydrofolate + NADPH + H(+) = 5-methyluridine(54) in tRNA + (6S)-5,6,7,8-tetrahydrofolate + NADP(+). In terms of biological role, catalyzes the folate-dependent formation of 5-methyl-uridine at position 54 (M-5-U54) in all tRNAs. The polypeptide is Methylenetetrahydrofolate--tRNA-(uracil-5-)-methyltransferase TrmFO (Deinococcus radiodurans (strain ATCC 13939 / DSM 20539 / JCM 16871 / CCUG 27074 / LMG 4051 / NBRC 15346 / NCIMB 9279 / VKM B-1422 / R1)).